The primary structure comprises 155 residues: Interferon gamma (155 aa).

A signal peptide spans 1–22 (MNATHCILALQLFLMAVSGCYC). Residues asparagine 38 and asparagine 90 are each glycosylated (N-linked (GlcNAc...) asparagine).

The protein belongs to the type II (or gamma) interferon family. In terms of assembly, homodimer. Interacts with IFNGR1 (via extracellular domain); this interaction promotes IFNGR1 dimerization. As to expression, released primarily from activated T lymphocytes.

It localises to the secreted. Its function is as follows. Type II interferon produced by immune cells such as T-cells and NK cells that plays crucial roles in antimicrobial, antiviral, and antitumor responses by activating effector immune cells and enhancing antigen presentation. Primarily signals through the JAK-STAT pathway after interaction with its receptor IFNGR1 to affect gene regulation. Upon IFNG binding, IFNGR1 intracellular domain opens out to allow association of downstream signaling components JAK2, JAK1 and STAT1, leading to STAT1 activation, nuclear translocation and transcription of IFNG-regulated genes. Many of the induced genes are transcription factors such as IRF1 that are able to further drive regulation of a next wave of transcription. Plays a role in class I antigen presentation pathway by inducing a replacement of catalytic proteasome subunits with immunoproteasome subunits. In turn, increases the quantity, quality, and repertoire of peptides for class I MHC loading. Increases the efficiency of peptide generation also by inducing the expression of activator PA28 that associates with the proteasome and alters its proteolytic cleavage preference. Up-regulates as well MHC II complexes on the cell surface by promoting expression of several key molecules such as cathepsins B/CTSB, H/CTSH, and L/CTSL. Participates in the regulation of hematopoietic stem cells during development and under homeostatic conditions by affecting their development, quiescence, and differentiation. In Mus musculus (Mouse), this protein is Interferon gamma (Ifng).